Reading from the N-terminus, the 896-residue chain is DNA double-strand break repair Rad50 ATPase (896 aa).

ATP contacts are provided by residues 32–38 (NGAGKSS) and glutamine 137. Coiled-coil stretches lie at residues 200–274 (RRYQ…KLQE), 412–505 (EEIR…LISM), 580–611 (IGDIEALRKQKDEVSKKLKDAEDRTHEIESEF), 636–669 (IKLAEDLKRQRETLREKVKDLRSRSAGMDEIQKR), and 702–731 (RSKVETLRSHVSEIEQRISDRERDIERMKK). The 97-residue stretch at 411–507 (YEEIRRDIDE…KKRQLISMES (97 aa)) folds into the Zinc-hook domain. Zn(2+) is bound by residues cysteine 455 and cysteine 458.

It belongs to the SMC family. RAD50 subfamily. In terms of assembly, homodimer. Forms a heterotetramer composed of two Mre11 subunits and two Rad50 subunits. Requires Zn(2+) as cofactor.

Part of the Rad50/Mre11 complex, which is involved in the early steps of DNA double-strand break (DSB) repair. The complex may facilitate opening of the processed DNA ends to aid in the recruitment of HerA and NurA. Rad50 controls the balance between DNA end bridging and DNA resection via ATP-dependent structural rearrangements of the Rad50/Mre11 complex. The polypeptide is DNA double-strand break repair Rad50 ATPase (Thermoplasma acidophilum (strain ATCC 25905 / DSM 1728 / JCM 9062 / NBRC 15155 / AMRC-C165)).